The following is a 149-amino-acid chain: SsrA-binding protein (149 aa).

The protein belongs to the SmpB family.

The protein resides in the cytoplasm. Required for rescue of stalled ribosomes mediated by trans-translation. Binds to transfer-messenger RNA (tmRNA), required for stable association of tmRNA with ribosomes. tmRNA and SmpB together mimic tRNA shape, replacing the anticodon stem-loop with SmpB. tmRNA is encoded by the ssrA gene; the 2 termini fold to resemble tRNA(Ala) and it encodes a 'tag peptide', a short internal open reading frame. During trans-translation Ala-aminoacylated tmRNA acts like a tRNA, entering the A-site of stalled ribosomes, displacing the stalled mRNA. The ribosome then switches to translate the ORF on the tmRNA; the nascent peptide is terminated with the 'tag peptide' encoded by the tmRNA and targeted for degradation. The ribosome is freed to recommence translation, which seems to be the essential function of trans-translation. This Thermosipho africanus (strain TCF52B) protein is SsrA-binding protein.